A 490-amino-acid chain; its full sequence is Aspartyl/glutamyl-tRNA(Asn/Gln) amidotransferase subunit B (490 aa).

The protein belongs to the GatB/GatE family. GatB subfamily. As to quaternary structure, heterotrimer of A, B and C subunits.

The enzyme catalyses L-glutamyl-tRNA(Gln) + L-glutamine + ATP + H2O = L-glutaminyl-tRNA(Gln) + L-glutamate + ADP + phosphate + H(+). It catalyses the reaction L-aspartyl-tRNA(Asn) + L-glutamine + ATP + H2O = L-asparaginyl-tRNA(Asn) + L-glutamate + ADP + phosphate + 2 H(+). In terms of biological role, allows the formation of correctly charged Asn-tRNA(Asn) or Gln-tRNA(Gln) through the transamidation of misacylated Asp-tRNA(Asn) or Glu-tRNA(Gln) in organisms which lack either or both of asparaginyl-tRNA or glutaminyl-tRNA synthetases. The reaction takes place in the presence of glutamine and ATP through an activated phospho-Asp-tRNA(Asn) or phospho-Glu-tRNA(Gln). This chain is Aspartyl/glutamyl-tRNA(Asn/Gln) amidotransferase subunit B, found in Symbiobacterium thermophilum (strain DSM 24528 / JCM 14929 / IAM 14863 / T).